The chain runs to 117 residues: Small ribosomal subunit protein uS19c (117 aa).

Belongs to the universal ribosomal protein uS19 family.

The protein resides in the plastid. In terms of biological role, protein S19 forms a complex with S13 that binds strongly to the 16S ribosomal RNA. This is Small ribosomal subunit protein uS19c (rps19) from Helicosporidium sp. subsp. Simulium jonesii (Green alga).